The sequence spans 502 residues: Probable cytosol aminopeptidase (502 aa).

Residues lysine 269 and aspartate 274 each coordinate Mn(2+). Lysine 281 is an active-site residue. The Mn(2+) site is built by aspartate 292, aspartate 351, and glutamate 353. The active site involves arginine 355.

It belongs to the peptidase M17 family. Requires Mn(2+) as cofactor.

The protein resides in the cytoplasm. It carries out the reaction Release of an N-terminal amino acid, Xaa-|-Yaa-, in which Xaa is preferably Leu, but may be other amino acids including Pro although not Arg or Lys, and Yaa may be Pro. Amino acid amides and methyl esters are also readily hydrolyzed, but rates on arylamides are exceedingly low.. The catalysed reaction is Release of an N-terminal amino acid, preferentially leucine, but not glutamic or aspartic acids.. Its function is as follows. Presumably involved in the processing and regular turnover of intracellular proteins. Catalyzes the removal of unsubstituted N-terminal amino acids from various peptides. This Vibrio vulnificus (strain CMCP6) protein is Probable cytosol aminopeptidase.